The following is a 76-amino-acid chain: Acyl carrier protein (76 aa).

The 75-residue stretch at 2–76 folds into the Carrier domain; sequence SNIEERVIKV…QSAIDFVKSR (75 aa). At S37 the chain carries O-(pantetheine 4'-phosphoryl)serine.

It belongs to the acyl carrier protein (ACP) family. Post-translationally, 4'-phosphopantetheine is transferred from CoA to a specific serine of apo-ACP by AcpS. This modification is essential for activity because fatty acids are bound in thioester linkage to the sulfhydryl of the prosthetic group.

It localises to the cytoplasm. It participates in lipid metabolism; fatty acid biosynthesis. Its function is as follows. Carrier of the growing fatty acid chain in fatty acid biosynthesis. This Dichelobacter nodosus (strain VCS1703A) protein is Acyl carrier protein.